The chain runs to 444 residues: Phosphoglucosamine mutase (444 aa).

S101 serves as the catalytic Phosphoserine intermediate. Mg(2+)-binding residues include S101, D240, D242, and D244. Residue S101 is modified to Phosphoserine.

This sequence belongs to the phosphohexose mutase family. Mg(2+) is required as a cofactor. In terms of processing, activated by phosphorylation.

It carries out the reaction alpha-D-glucosamine 1-phosphate = D-glucosamine 6-phosphate. Catalyzes the conversion of glucosamine-6-phosphate to glucosamine-1-phosphate. The polypeptide is Phosphoglucosamine mutase (Photobacterium profundum (strain SS9)).